Reading from the N-terminus, the 337-residue chain is Ketol-acid reductoisomerase (NADP(+)) (337 aa).

The 181-residue stretch at 3–183 folds into the KARI N-terminal Rossmann domain; the sequence is VEMFYDDDAD…GGTRAGVIKT (181 aa). NADP(+) is bound by residues 26-29, K49, S52, S54, and 84-87; these read YGSQ and DTAQ. H109 is a catalytic residue. G135 lines the NADP(+) pocket. The KARI C-terminal knotted domain occupies 184 to 329; it reads TFKEETETDL…KKLRDLMSWV (146 aa). Mg(2+) contacts are provided by D192, E196, E228, and E232. Position 253 (S253) interacts with substrate.

This sequence belongs to the ketol-acid reductoisomerase family. Mg(2+) serves as cofactor.

It carries out the reaction (2R)-2,3-dihydroxy-3-methylbutanoate + NADP(+) = (2S)-2-acetolactate + NADPH + H(+). The enzyme catalyses (2R,3R)-2,3-dihydroxy-3-methylpentanoate + NADP(+) = (S)-2-ethyl-2-hydroxy-3-oxobutanoate + NADPH + H(+). It participates in amino-acid biosynthesis; L-isoleucine biosynthesis; L-isoleucine from 2-oxobutanoate: step 2/4. Its pathway is amino-acid biosynthesis; L-valine biosynthesis; L-valine from pyruvate: step 2/4. In terms of biological role, involved in the biosynthesis of branched-chain amino acids (BCAA). Catalyzes an alkyl-migration followed by a ketol-acid reduction of (S)-2-acetolactate (S2AL) to yield (R)-2,3-dihydroxy-isovalerate. In the isomerase reaction, S2AL is rearranged via a Mg-dependent methyl migration to produce 3-hydroxy-3-methyl-2-ketobutyrate (HMKB). In the reductase reaction, this 2-ketoacid undergoes a metal-dependent reduction by NADPH to yield (R)-2,3-dihydroxy-isovalerate. This is Ketol-acid reductoisomerase (NADP(+)) from Rhodococcus jostii (strain RHA1).